Here is a 131-residue protein sequence, read N- to C-terminus: Hypocretin neuropeptide precursor (131 aa).

Residues methionine 1–alanine 33 form the signal peptide. Glutamine 34 carries the post-translational modification Pyrrolidone carboxylic acid. Cystine bridges form between cysteine 39/cysteine 45 and cysteine 40/cysteine 47. Leucine 66 carries the leucine amide modification. Position 97 is a methionine amide (methionine 97). A propeptide spans glycine 98–isoleucine 131 (removed in mature form).

The protein belongs to the orexin family. In terms of processing, specific enzymatic cleavages at paired basic residues yield the different active peptides. As to expression, abundantly expressed in subthalamic nucleus but undetectable in other brain regions tested (hypothalamus was not tested) and in heart, placenta, lung, liver, skeletal muscle, kidney and pancreas.

Its subcellular location is the rough endoplasmic reticulum. The protein resides in the cytoplasmic vesicle. It is found in the synapse. Its function is as follows. Neuropeptides that play a significant role in the regulation of food intake and sleep-wakefulness, possibly by coordinating the complex behavioral and physiologic responses of these complementary homeostatic functions. A broader role in the homeostatic regulation of energy metabolism, autonomic function, hormonal balance and the regulation of body fluids, is also suggested. In terms of biological role, binds to orexin receptors HCRTR1/OX1R and HCRTR2/OX2R with a high affinity. Stimulates food intake. Modulates pituitary luteinizing hormone secretion in an ovarian steroid-dependent manner. Binds to orexin receptor HCRTR2/OX2R only. Stimulates food intake. Modulates pituitary luteinizing hormone secretion in an ovarian steroid-dependent manner. The sequence is that of Hypocretin neuropeptide precursor from Homo sapiens (Human).